A 176-amino-acid chain; its full sequence is Natural cytotoxicity triggering receptor 3 (176 aa).

The first 18 residues, 1–18 (MAWMLLLILIMVYPGSCA), serve as a signal peptide directing secretion. Residues 19–126 (LWVSQPPEIR…VGTGNGTRLV (108 aa)) form the Ig-like domain. At 19 to 135 (LWVSQPPEIR…VVEKEYPQLG (117 aa)) the chain is on the extracellular side. Cysteine 39 and cysteine 108 are oxidised to a cystine. N-linked (GlcNAc...) asparagine glycosylation is found at asparagine 42 and asparagine 121. A helical transmembrane segment spans residues 136–156 (AGTVLLLRAGFYAVSFLSVAV). The Cytoplasmic segment spans residues 157-176 (GSTLYYQGKCHCHMGTHCHS).

The protein belongs to the natural cytotoxicity receptor (NCR) family. In terms of assembly, homodimer in the unliganted form. Interacts with CD3Z. Interacts with and is activated by binding to NCR3LG1. Interacts with and is activated by binding to BAG6. Interacts with and is inhibited by binding to LGALS3.

The protein resides in the cell membrane. Cell membrane receptor of natural killer/NK cells that is activated by binding of extracellular ligands including BAG6 and NCR3LG1. Stimulates NK cells cytotoxicity toward neighboring cells producing these ligands. It controls, for instance, NK cells cytotoxicity against tumor cells. Engagement of NCR3 by BAG6 also promotes myeloid dendritic cells (DC) maturation, both through killing DCs that did not acquire a mature phenotype, and inducing the release by NK cells of TNFA and IFNG that promote DC maturation. The chain is Natural cytotoxicity triggering receptor 3 (NCR3) from Macaca fascicularis (Crab-eating macaque).